Here is a 129-residue protein sequence, read N- to C-terminus: 3-aminoacrylate deaminase RutC (129 aa).

Belongs to the RutC family.

It carries out the reaction (Z)-3-aminoacrylate + H2O + H(+) = 3-oxopropanoate + NH4(+). Involved in pyrimidine catabolism. Catalyzes the deamination of 3-aminoacrylate to malonic semialdehyde, a reaction that can also occur spontaneously. RutC may facilitate the reaction and modulate the metabolic fitness, rather than catalyzing essential functions. The chain is 3-aminoacrylate deaminase RutC from Rhizobium rhizogenes (strain K84 / ATCC BAA-868) (Agrobacterium radiobacter).